Consider the following 119-residue polypeptide: Large ribosomal subunit protein bL20 (119 aa).

This sequence belongs to the bacterial ribosomal protein bL20 family.

Its function is as follows. Binds directly to 23S ribosomal RNA and is necessary for the in vitro assembly process of the 50S ribosomal subunit. It is not involved in the protein synthesizing functions of that subunit. The chain is Large ribosomal subunit protein bL20 from Rhodopseudomonas palustris (strain HaA2).